The sequence spans 173 residues: Acireductone dioxygenase (173 aa).

The tract at residues 1 to 20 (MKVYEYDNSTEDQREDHDSG) is disordered. Residues histidine 81, histidine 83, glutamate 87, and histidine 126 each contribute to the Fe(2+) site. Ni(2+)-binding residues include histidine 81, histidine 83, glutamate 87, and histidine 126.

It belongs to the acireductone dioxygenase (ARD) family. Requires Fe(2+) as cofactor. The cofactor is Ni(2+).

Its subcellular location is the cytoplasm. The protein localises to the nucleus. The catalysed reaction is 1,2-dihydroxy-5-(methylsulfanyl)pent-1-en-3-one + O2 = 4-methylsulfanyl-2-oxobutanoate + formate + 2 H(+). The enzyme catalyses 1,2-dihydroxy-5-(methylsulfanyl)pent-1-en-3-one + O2 = 3-(methylsulfanyl)propanoate + CO + formate + 2 H(+). Its pathway is amino-acid biosynthesis; L-methionine biosynthesis via salvage pathway; L-methionine from S-methyl-5-thio-alpha-D-ribose 1-phosphate: step 5/6. Catalyzes 2 different reactions between oxygen and the acireductone 1,2-dihydroxy-3-keto-5-methylthiopentene (DHK-MTPene) depending upon the metal bound in the active site. Fe-containing acireductone dioxygenase (Fe-ARD) produces formate and 2-keto-4-methylthiobutyrate (KMTB), the alpha-ketoacid precursor of methionine in the methionine recycle pathway. Ni-containing acireductone dioxygenase (Ni-ARD) produces methylthiopropionate, carbon monoxide and formate, and does not lie on the methionine recycle pathway. The chain is Acireductone dioxygenase from Tuber melanosporum (strain Mel28) (Perigord black truffle).